Reading from the N-terminus, the 230-residue chain is MVKLVFARHGESEWNKANLFTGWADVDLSEKGTQQAIDAGKLIQAAGIEFDLAFTSVLKRAIKTTNLALEAADQLWVPVEKSWRLNERHYGGLTGKNKAEAAEQFGDEQVHIWRRSYDVLPPDMAKDDEHSAHTDRRYASLDDSVIPDAENLKVTLERALPFWEDKIAPALKDGKNVFVGAHGNSIRALVKHIKQLSDDEIMDVEIPNFPPLVFEFDEKLNLVSEYYLGK.

Substrate is bound by residues 8 to 15 (RHGESEWN), 21 to 22 (TG), Arg-60, 87 to 90 (ERHY), Lys-98, 114 to 115 (RR), and 183 to 184 (GN). The Tele-phosphohistidine intermediate role is filled by His-9. The Proton donor/acceptor role is filled by Glu-87.

It belongs to the phosphoglycerate mutase family. BPG-dependent PGAM subfamily.

It catalyses the reaction (2R)-2-phosphoglycerate = (2R)-3-phosphoglycerate. Its pathway is carbohydrate degradation; glycolysis; pyruvate from D-glyceraldehyde 3-phosphate: step 3/5. Catalyzes the interconversion of 2-phosphoglycerate and 3-phosphoglycerate. In Streptococcus agalactiae serotype Ia (strain ATCC 27591 / A909 / CDC SS700), this protein is 2,3-bisphosphoglycerate-dependent phosphoglycerate mutase.